Reading from the N-terminus, the 159-residue chain is Cytochrome c-type biogenesis protein CcmE (159 aa).

The Cytoplasmic segment spans residues 1–8 (MNIRRKNR). A helical; Signal-anchor for type II membrane protein membrane pass occupies residues 9–29 (LWIACAVLAGLALTIGLVLYA). The Periplasmic portion of the chain corresponds to 30–159 (LRSNIDLFYT…PASVYKDPAS (130 aa)). Residues H130 and Y134 each coordinate heme. The segment covering 132-147 (ENYTPPEVEKAMEANH) has biased composition (basic and acidic residues). Residues 132–159 (ENYTPPEVEKAMEANHRRPASVYKDPAS) form a disordered region.

It belongs to the CcmE/CycJ family.

It is found in the cell inner membrane. In terms of biological role, heme chaperone required for the biogenesis of c-type cytochromes. Transiently binds heme delivered by CcmC and transfers the heme to apo-cytochromes in a process facilitated by CcmF and CcmH. This chain is Cytochrome c-type biogenesis protein CcmE, found in Shigella sonnei (strain Ss046).